Here is a 1230-residue protein sequence, read N- to C-terminus: Serine/threonine-protein kinase CST20 (1230 aa).

Positions 1 to 20 (MSILSENNPTPTSITDPNKS) are enriched in polar residues. 2 disordered regions span residues 1 to 384 (MSIL…TAHN) and 413 to 470 (SSLE…HSQE). 2 stretches are compositionally biased toward low complexity: residues 57-70 (NTTS…SLGS) and 96-125 (SGSG…NPES). The span at 150 to 161 (HQGDDSDNEKQY) shows a compositional bias: basic and acidic residues. 3 stretches are compositionally biased toward polar residues: residues 175–197 (DSYS…NNVS), 207–224 (TSSL…NENA), and 237–246 (PTSKTSSFHD). A compositionally biased stretch (low complexity) spans 248 to 257 (SSVISSSTSV). Composition is skewed to polar residues over residues 262 to 277 (SNPT…SYKS) and 311 to 330 (DTLS…TLQG). Composition is skewed to low complexity over residues 349 to 381 (NTSA…STST) and 439 to 468 (KVRG…NSHS). In terms of domain architecture, CRIB spans 475–488 (ISTPFNAKHLAHVG). Disordered regions lie at residues 545–831 (FHFD…ALAD) and 867–919 (LREK…KQAA). Residues 550–561 (NKSSSSGWSNEN) show a composition bias toward polar residues. The segment covering 570–581 (SNSGSGSGGGGA) has biased composition (gly residues). A compositionally biased stretch (polar residues) spans 604–613 (ITPSQSMPTK). A compositionally biased stretch (basic and acidic residues) spans 614–628 (TESKQSENQHPHEDN). Positions 629-642 (ATQYTPRTPTSHVQ) are enriched in polar residues. Low complexity-rich tracts occupy residues 670-683 (PSSQ…SQSD), 696-710 (SPSK…SKSL), and 736-749 (SIPK…SLSS). The segment covering 750–761 (QLRPATNGSTTA) has biased composition (polar residues). The segment covering 789 to 807 (APPPPPSAPPAPPVPPAPP) has biased composition (pro residues). A compositionally biased stretch (polar residues) spans 811–826 (LSEQTSEIPQQRTAPS). Residues 867 to 876 (LREKNERQNR) show a composition bias toward basic and acidic residues. Polar residues predominate over residues 877–892 (QQETGQNNADTASGGS). The Protein kinase domain occupies 953–1205 (YVDLVKIGQG…ADELLHDNFI (253 aa)). Residues 959-967 (IGQGASGGV) and Lys983 contribute to the ATP site. Catalysis depends on Asp1073, which acts as the Proton acceptor.

Belongs to the protein kinase superfamily. STE Ser/Thr protein kinase family. STE20 subfamily.

Its subcellular location is the cytoplasm. It is found in the nucleus. The catalysed reaction is L-seryl-[protein] + ATP = O-phospho-L-seryl-[protein] + ADP + H(+). The enzyme catalyses L-threonyl-[protein] + ATP = O-phospho-L-threonyl-[protein] + ADP + H(+). In terms of biological role, MAP4K component of the MAPK pathway required for the mating pheromone response, and the regulation of cell polarity and cell cycle. Phosphorylates histone H2B to form H2BS10ph. Required for hyphal formation and virulence. The protein is Serine/threonine-protein kinase CST20 (CST20) of Candida albicans (Yeast).